Here is a 214-residue protein sequence, read N- to C-terminus: Probable nicotinate-nucleotide adenylyltransferase (214 aa).

This sequence belongs to the NadD family.

The catalysed reaction is nicotinate beta-D-ribonucleotide + ATP + H(+) = deamido-NAD(+) + diphosphate. It participates in cofactor biosynthesis; NAD(+) biosynthesis; deamido-NAD(+) from nicotinate D-ribonucleotide: step 1/1. In terms of biological role, catalyzes the reversible adenylation of nicotinate mononucleotide (NaMN) to nicotinic acid adenine dinucleotide (NaAD). This chain is Probable nicotinate-nucleotide adenylyltransferase, found in Pelodictyon phaeoclathratiforme (strain DSM 5477 / BU-1).